A 278-amino-acid chain; its full sequence is 2,5-diketo-D-gluconic acid reductase A (278 aa).

Catalysis depends on tyrosine 50, which acts as the Proton donor. Histidine 108 serves as a coordination point for substrate. Glycine 188–asparagine 242 is a binding site for NADP(+). The tract at residues aspartate 259–aspartate 278 is disordered.

Belongs to the aldo/keto reductase family. Monomer.

It is found in the cytoplasm. It carries out the reaction 2-dehydro-L-idonate + NADP(+) = 2,5-didehydro-D-gluconate + NADPH + H(+). Inhibited by Zn(2+), Fe(3+), Cu(2+) and Ni(2+). Its function is as follows. Catalyzes the reduction of 2,5-diketo-D-gluconic acid (25DKG) to 2-keto-L-gulonic acid (2KLG). 5-keto-D-fructose and dihydroxyacetone can also serve as substrates. 25DKGR-A exhibits a greater selectivity for the substrate and higher thermal stability than 25DKGR-B. The protein is 2,5-diketo-D-gluconic acid reductase A (dkgA) of Corynebacterium sp. (strain ATCC 31090).